The primary structure comprises 298 residues: 4-hydroxy-3-methylbut-2-enyl diphosphate reductase (298 aa).

Cys12 contacts [4Fe-4S] cluster. 2 residues coordinate (2E)-4-hydroxy-3-methylbut-2-enyl diphosphate: His40 and His78. Residues His40 and His78 each coordinate dimethylallyl diphosphate. Positions 40 and 78 each coordinate isopentenyl diphosphate. Cys100 lines the [4Fe-4S] cluster pocket. His128 is a (2E)-4-hydroxy-3-methylbut-2-enyl diphosphate binding site. His128 lines the dimethylallyl diphosphate pocket. His128 serves as a coordination point for isopentenyl diphosphate. The active-site Proton donor is the Glu130. Residue Thr171 participates in (2E)-4-hydroxy-3-methylbut-2-enyl diphosphate binding. Cys200 provides a ligand contact to [4Fe-4S] cluster. 4 residues coordinate (2E)-4-hydroxy-3-methylbut-2-enyl diphosphate: Ser228, Ser229, Asn230, and Ser270. Residues Ser228, Ser229, Asn230, and Ser270 each coordinate dimethylallyl diphosphate. Ser228, Ser229, Asn230, and Ser270 together coordinate isopentenyl diphosphate.

Belongs to the IspH family. It depends on [4Fe-4S] cluster as a cofactor.

The enzyme catalyses isopentenyl diphosphate + 2 oxidized [2Fe-2S]-[ferredoxin] + H2O = (2E)-4-hydroxy-3-methylbut-2-enyl diphosphate + 2 reduced [2Fe-2S]-[ferredoxin] + 2 H(+). It catalyses the reaction dimethylallyl diphosphate + 2 oxidized [2Fe-2S]-[ferredoxin] + H2O = (2E)-4-hydroxy-3-methylbut-2-enyl diphosphate + 2 reduced [2Fe-2S]-[ferredoxin] + 2 H(+). It functions in the pathway isoprenoid biosynthesis; dimethylallyl diphosphate biosynthesis; dimethylallyl diphosphate from (2E)-4-hydroxy-3-methylbutenyl diphosphate: step 1/1. The protein operates within isoprenoid biosynthesis; isopentenyl diphosphate biosynthesis via DXP pathway; isopentenyl diphosphate from 1-deoxy-D-xylulose 5-phosphate: step 6/6. Functionally, catalyzes the conversion of 1-hydroxy-2-methyl-2-(E)-butenyl 4-diphosphate (HMBPP) into a mixture of isopentenyl diphosphate (IPP) and dimethylallyl diphosphate (DMAPP). Acts in the terminal step of the DOXP/MEP pathway for isoprenoid precursor biosynthesis. This is 4-hydroxy-3-methylbut-2-enyl diphosphate reductase from Kosmotoga olearia (strain ATCC BAA-1733 / DSM 21960 / TBF 19.5.1).